Consider the following 274-residue polypeptide: Large ribosomal subunit protein uL2 (274 aa).

Residues 197-274 (NSDHALEKSG…SKYIIERRKK (78 aa)) are disordered. Composition is skewed to basic residues over residues 207 to 220 (KAGR…RPHN) and 244 to 274 (PRSR…RRKK).

The protein belongs to the universal ribosomal protein uL2 family. Part of the 50S ribosomal subunit. Forms a bridge to the 30S subunit in the 70S ribosome.

One of the primary rRNA binding proteins. Required for association of the 30S and 50S subunits to form the 70S ribosome, for tRNA binding and peptide bond formation. It has been suggested to have peptidyltransferase activity; this is somewhat controversial. Makes several contacts with the 16S rRNA in the 70S ribosome. The protein is Large ribosomal subunit protein uL2 of Porphyromonas gingivalis (strain ATCC BAA-308 / W83).